The primary structure comprises 379 residues: UDP-4-amino-4-deoxy-L-arabinose--oxoglutarate aminotransferase (379 aa).

N6-(pyridoxal phosphate)lysine is present on Lys182.

The protein belongs to the DegT/DnrJ/EryC1 family. ArnB subfamily. As to quaternary structure, homodimer. Pyridoxal 5'-phosphate is required as a cofactor.

It carries out the reaction UDP-4-amino-4-deoxy-beta-L-arabinose + 2-oxoglutarate = UDP-beta-L-threo-pentopyranos-4-ulose + L-glutamate. It participates in nucleotide-sugar biosynthesis; UDP-4-deoxy-4-formamido-beta-L-arabinose biosynthesis; UDP-4-deoxy-4-formamido-beta-L-arabinose from UDP-alpha-D-glucuronate: step 2/3. Its pathway is bacterial outer membrane biogenesis; lipopolysaccharide biosynthesis. Its function is as follows. Catalyzes the conversion of UDP-4-keto-arabinose (UDP-Ara4O) to UDP-4-amino-4-deoxy-L-arabinose (UDP-L-Ara4N). The modified arabinose is attached to lipid A and is required for resistance to polymyxin and cationic antimicrobial peptides. The polypeptide is UDP-4-amino-4-deoxy-L-arabinose--oxoglutarate aminotransferase (Shigella flexneri).